The chain runs to 916 residues: Isoleucine--tRNA ligase (916 aa).

Residues 57–67 carry the 'HIGH' region motif; that stretch reads PYANGNLHMGH. An L-isoleucyl-5'-AMP-binding site is contributed by Glu-554. The 'KMSKS' region motif lies at 595–599; it reads KMSKS. Lys-598 serves as a coordination point for ATP. The Zn(2+) site is built by Cys-885, Cys-888, Cys-905, and Cys-908.

The protein belongs to the class-I aminoacyl-tRNA synthetase family. IleS type 1 subfamily. Monomer. The cofactor is Zn(2+).

The protein localises to the cytoplasm. The catalysed reaction is tRNA(Ile) + L-isoleucine + ATP = L-isoleucyl-tRNA(Ile) + AMP + diphosphate. Its function is as follows. Catalyzes the attachment of isoleucine to tRNA(Ile). As IleRS can inadvertently accommodate and process structurally similar amino acids such as valine, to avoid such errors it has two additional distinct tRNA(Ile)-dependent editing activities. One activity is designated as 'pretransfer' editing and involves the hydrolysis of activated Val-AMP. The other activity is designated 'posttransfer' editing and involves deacylation of mischarged Val-tRNA(Ile). The protein is Isoleucine--tRNA ligase of Staphylococcus epidermidis (strain ATCC 12228 / FDA PCI 1200).